The primary structure comprises 294 residues: Cytidine deaminase (294 aa).

CMP/dCMP-type deaminase domains lie at 48-168 (DEDA…FGPK) and 186-294 (LTGD…VLLA). Residue 89-91 (NME) coordinates substrate. H102 provides a ligand contact to Zn(2+). E104 acts as the Proton donor in catalysis. 2 residues coordinate Zn(2+): C129 and C132.

It belongs to the cytidine and deoxycytidylate deaminase family. In terms of assembly, homodimer. The cofactor is Zn(2+).

The catalysed reaction is cytidine + H2O + H(+) = uridine + NH4(+). It carries out the reaction 2'-deoxycytidine + H2O + H(+) = 2'-deoxyuridine + NH4(+). Its function is as follows. This enzyme scavenges exogenous and endogenous cytidine and 2'-deoxycytidine for UMP synthesis. The protein is Cytidine deaminase of Escherichia coli O139:H28 (strain E24377A / ETEC).